Consider the following 365-residue polypeptide: MSCQAFSADSFTTLAGDSLPLLMHHASAADCLPSSASTHTHNMVSAVPSGLSLLQSSKRSHMHLSTSTLGNGPPGLHYPVTPCHYSNQQTTYGMMAAQEMLSASISQTRILQTCSVPHPNMVNGANTLQGSLAPCLYKFPEHGLGGGSCSLSHSFPPLPPAVLSEEPPLGGTKDLRLRSRPPDDPPDMDSPQIRELEKFANNFKLRRIKLGYTQTNVGEALAAVHGSEFSQTTICRFENLQLSFKNACTLKAILAKWLDEAEQAGALFNEKMGMNERKRKRRTTISLGAKEALERSFREKIKPSSQEIVRMAEGLHLEKEVVRVWFCNRRQREKRVKTSLHHSSYLTKDSPTYRYPYLSPNAIKP.

A 9aaTAD motif is present at residues 5 to 12; that stretch reads AFSADSFT. Positions 160-191 are disordered; it reads PAVLSEEPPLGGTKDLRLRSRPPDDPPDMDSP. Positions 173–183 are enriched in basic and acidic residues; it reads KDLRLRSRPPD. One can recognise a POU-specific domain in the interval 188 to 262; that stretch reads MDSPQIRELE…ILAKWLDEAE (75 aa). A DNA-binding region (homeobox) is located at residues 278 to 337; sequence KRKRRTTISLGAKEALERSFREKIKPSSQEIVRMAEGLHLEKEVVRVWFCNRRQREKRVK.

This sequence belongs to the POU transcription factor family. Class-1 subfamily.

Its subcellular location is the nucleus. Transcription factor that activates growth hormone and prolactin genes. Specifically binds to the consensus sequence 5'-TAAAT-3'. The sequence is that of Pituitary-specific positive transcription factor 1 (pou1f1) from Oncorhynchus keta (Chum salmon).